Here is a 242-residue protein sequence, read N- to C-terminus: ATP synthase subunit a, chloroplastic (242 aa).

Helical transmembrane passes span 34–54 (GQVL…AVLG), 93–113 (VPFI…GAII), 132–152 (INTT…AGLS), 188–210 (LFGN…PLVI), and 222–242 (GSVQ…EALE).

The protein belongs to the ATPase A chain family. As to quaternary structure, F-type ATPases have 2 components, CF(1) - the catalytic core - and CF(0) - the membrane proton channel. CF(1) has five subunits: alpha(3), beta(3), gamma(1), delta(1), epsilon(1). CF(0) has four main subunits: a, b, b' and c.

It is found in the plastid. The protein resides in the chloroplast thylakoid membrane. Functionally, key component of the proton channel; it plays a direct role in the translocation of protons across the membrane. The polypeptide is ATP synthase subunit a, chloroplastic (Trieres chinensis (Marine centric diatom)).